We begin with the raw amino-acid sequence, 70 residues long: NAD(P)H-quinone oxidoreductase subunit O (70 aa).

The protein belongs to the complex I NdhO subunit family. NDH-1 can be composed of about 15 different subunits; different subcomplexes with different compositions have been identified which probably have different functions.

The protein localises to the cellular thylakoid membrane. The catalysed reaction is a plastoquinone + NADH + (n+1) H(+)(in) = a plastoquinol + NAD(+) + n H(+)(out). The enzyme catalyses a plastoquinone + NADPH + (n+1) H(+)(in) = a plastoquinol + NADP(+) + n H(+)(out). Functionally, NDH-1 shuttles electrons from an unknown electron donor, via FMN and iron-sulfur (Fe-S) centers, to quinones in the respiratory and/or the photosynthetic chain. The immediate electron acceptor for the enzyme in this species is believed to be plastoquinone. Couples the redox reaction to proton translocation, and thus conserves the redox energy in a proton gradient. Cyanobacterial NDH-1 also plays a role in inorganic carbon-concentration. This chain is NAD(P)H-quinone oxidoreductase subunit O, found in Nostoc sp. (strain PCC 7120 / SAG 25.82 / UTEX 2576).